A 771-amino-acid chain; its full sequence is Carnitine O-palmitoyltransferase 1, muscle isoform (771 aa).

The Cytoplasmic portion of the chain corresponds to 1 to 47; sequence MAEAHQAVAFQFTVTPEGVDFQLSREVLKHIYLSVIRSWKKRLIRIK. The helical transmembrane segment at 48–73 threads the bilayer; that stretch reads NGILRGVYPGSPTSWLVVVMATAGSS. Over 74–101 the chain is Mitochondrial intermembrane; sequence YYNVDISMGLVYYIQRWLPEGRPYRTPY. Residues 102 to 121 form a helical membrane-spanning segment; the sequence is TRTLFSMAIFSTGVWMMGIF. The Cytoplasmic segment spans residues 122-771; the sequence is FFRQTLKLLL…NLFQVPKADG (650 aa). Catalysis depends on histidine 472, which acts as the Proton acceptor. A CoA-binding site is contributed by 554-566; it reads GKGLIKKCRTSPD. (R)-carnitine-binding residues include tyrosine 588 and threonine 601.

The protein belongs to the carnitine/choline acetyltransferase family.

It is found in the mitochondrion outer membrane. It catalyses the reaction (R)-carnitine + hexadecanoyl-CoA = O-hexadecanoyl-(R)-carnitine + CoA. It functions in the pathway lipid metabolism; fatty acid beta-oxidation. Catalyzes the transfer of the acyl group of long-chain fatty acid-CoA conjugates onto carnitine, an essential step for the mitochondrial uptake of long-chain fatty acids and their subsequent beta-oxidation in the mitochondrion. The protein is Carnitine O-palmitoyltransferase 1, muscle isoform (CPT1B) of Bos taurus (Bovine).